The primary structure comprises 192 residues: Ion-translocating oxidoreductase complex subunit A (192 aa).

6 consecutive transmembrane segments (helical) span residues 5-25 (LLLLISTVLVNNFVLVKFLGL), 39-59 (IGMSMATTFVLTLASILSYLV), 65-85 (LPFDLGYLRTMSFILVIAVVV), 102-122 (ALGIYLPLITTNCAVLGVALL), 134-154 (AIYGFGAAVGFSLVLILFSAM), and 171-191 (AIAMITAGLMSLAFMGFTGLV).

It belongs to the NqrDE/RnfAE family. The complex is composed of six subunits: RnfA, RnfB, RnfC, RnfD, RnfE and RnfG.

It localises to the cell inner membrane. Functionally, part of a membrane-bound complex that couples electron transfer with translocation of ions across the membrane. This Shewanella sp. (strain MR-4) protein is Ion-translocating oxidoreductase complex subunit A.